An 86-amino-acid polypeptide reads, in one-letter code: uncharacterized protein (86 aa).

Transmembrane regions (helical) follow at residues 21 to 43 (VFWV…EATA) and 53 to 75 (FWYA…YFYF).

The protein localises to the cell membrane. This is an uncharacterized protein from Archaeoglobus fulgidus (strain ATCC 49558 / DSM 4304 / JCM 9628 / NBRC 100126 / VC-16).